Consider the following 338-residue polypeptide: Methionine synthase (338 aa).

Zn(2+)-binding residues include histidine 210, cysteine 212, glutamate 234, and cysteine 294.

The protein belongs to the archaeal MetE family. Zn(2+) serves as cofactor.

It functions in the pathway amino-acid biosynthesis; L-methionine biosynthesis via de novo pathway. Catalyzes the transfer of a methyl group to L-homocysteine resulting in methionine formation. The physiological methyl donor is unknown. The sequence is that of Methionine synthase from Pyrococcus abyssi (strain GE5 / Orsay).